The sequence spans 1061 residues: Atrial natriuretic peptide receptor 1 (1061 aa).

A signal peptide spans Met1–Ala32. Topologically, residues Gly33–Glu473 are extracellular. N-linked (GlcNAc...) asparagine glycans are attached at residues Asn34 and Asn45. Chloride is bound by residues Ser85, Gly117, and Cys118. Cystine bridges form between Cys92–Cys118 and Cys196–Cys245. Residues Asn212, Asn338, Asn379, Asn386, and Asn427 are each glycosylated (N-linked (GlcNAc...) asparagine). A disulfide bond links Cys455 and Cys464. A helical membrane pass occupies residues Val474–Tyr494. Residues Arg495 to Gly1061 lie on the Cytoplasmic side of the membrane. Phosphoserine occurs at positions 519 and 529. Positions Gly528–Asn805 constitute a Protein kinase domain. Phosphothreonine is present on Thr532. Ser534, Ser538, and Ser542 each carry phosphoserine. Position 545 is a phosphothreonine (Thr545). Residues Thr876 to Glu1006 form the Guanylate cyclase domain.

Belongs to the adenylyl cyclase class-4/guanylyl cyclase family. As to quaternary structure, homodimer. Phosphorylation of the protein kinase-like domain is required for full activation by ANP.

It is found in the membrane. It carries out the reaction GTP = 3',5'-cyclic GMP + diphosphate. Receptor for the atrial natriuretic peptide NPPA/ANP and the brain natriuretic peptide NPPB/BNP which are potent vasoactive hormones playing a key role in cardiovascular homeostasis. Plays an essential role in the regulation of endothelial cell senescence and vascular aging. Upon activation by ANP or BNP, stimulates the production of cyclic guanosine monophosphate (cGMP) that promotes vascular tone and volume homeostasis by activation of protein kinase cGMP-dependent 1/PRKG1 and subsequently PRKAA1, thereby controlling blood pressure and maintaining cardiovascular homeostasis. This Homo sapiens (Human) protein is Atrial natriuretic peptide receptor 1.